The following is a 58-amino-acid chain: Succinate dehydrogenase subunit 8B, mitochondrial (58 aa).

Component of complex II composed of eight subunits in plants: four classical SDH subunits SDH1, SDH2, SDH3 and SDH4 (a flavoprotein (FP), an iron-sulfur protein (IP), and a cytochrome b composed of a large and a small subunit.), as well as four subunits unknown in mitochondria from bacteria and heterotrophic eukaryotes.

The protein localises to the mitochondrion inner membrane. The protein operates within carbohydrate metabolism; tricarboxylic acid cycle. In Oryza sativa subsp. japonica (Rice), this protein is Succinate dehydrogenase subunit 8B, mitochondrial.